Here is a 621-residue protein sequence, read N- to C-terminus: Chaperone protein HtpG (621 aa).

The interval 1–328 (MKQEKKKFDA…SEDLPLNISR (328 aa)) is a; substrate-binding. The b stretch occupies residues 329-544 (ESLQHNNVLE…EAAMDIRMER (216 aa)). Positions 479–498 (VDQATSSSEEKNKDDKKSDD) are disordered. Basic and acidic residues predominate over residues 486–498 (SEEKNKDDKKSDD). Residues 545–621 (FLIEQKQIAN…LNDIVQKAIL (77 aa)) form a c region.

This sequence belongs to the heat shock protein 90 family. In terms of assembly, homodimer.

Its subcellular location is the cytoplasm. Functionally, molecular chaperone. Has ATPase activity. This is Chaperone protein HtpG from Rickettsia bellii (strain OSU 85-389).